A 238-amino-acid chain; its full sequence is tRNA (guanine-N(7)-)-methyltransferase (238 aa).

The S-adenosyl-L-methionine site is built by Glu68, Glu93, Asp121, and Asp143. Asp143 is a catalytic residue. Residues Lys147, Asp179, and 216-219 (TRYE) contribute to the substrate site.

This sequence belongs to the class I-like SAM-binding methyltransferase superfamily. TrmB family.

It carries out the reaction guanosine(46) in tRNA + S-adenosyl-L-methionine = N(7)-methylguanosine(46) in tRNA + S-adenosyl-L-homocysteine. The protein operates within tRNA modification; N(7)-methylguanine-tRNA biosynthesis. In terms of biological role, catalyzes the formation of N(7)-methylguanine at position 46 (m7G46) in tRNA. The sequence is that of tRNA (guanine-N(7)-)-methyltransferase from Paramagnetospirillum magneticum (strain ATCC 700264 / AMB-1) (Magnetospirillum magneticum).